Consider the following 264-residue polypeptide: Short chain dehydrogenase/reductase dmxR18 (264 aa).

4 residues coordinate NADP(+): isoleucine 24, aspartate 70, asparagine 97, and arginine 130. Catalysis depends on proton donor residues serine 146 and serine 147. Positions 161, 165, and 196 each coordinate NADP(+). Catalysis depends on tyrosine 161, which acts as the Proton acceptor. Catalysis depends on lysine 165, which acts as the Lowers pKa of active site Tyr.

The protein belongs to the short-chain dehydrogenases/reductases (SDR) family.

The enzyme catalyses 3,8,9,10-tetrahydroxy-6-methyl-1,4-dihydroanthracen-1-one + NADPH + H(+) = (3R)-3,8,9,10-tetrahydroxy-6-methyl-1,2,3,4-tetrahydroanthracen-1-one + NADP(+). It functions in the pathway secondary metabolite biosynthesis. In terms of biological role, short chain dehydrogenase/reductase; part of the gene cluster that mediates the biosynthesis of the dimeric xanthones cryptosporioptides. The pathway begins with the synthesis of atrochrysone thioester by the polyketide synthase dmx-nrPKS. The atrochrysone carboxyl ACP thioesterase dmxR1 then breaks the thioester bond and releases the atrochrysone carboxylic acid from dmx-nrPKS. Atrochrysone carboxylic acid is decarboxylated by the decarboxylase dmxR15, and oxidized by the anthrone oxygenase dmxR16 to yield emodin. Emodin is then reduced to emodin hydroquinone by the oxidoreductase dmxR7. A-ring reduction by the short chain dehydrogenase dmxR18, dehydration by the scytalone dehydratase-like protein dmxR17 and probable spontaneous re-oxidation, results in overall deoxygenation to chrysophanol. Baeyer-Villiger oxidation by the Baeyer-Villiger monooxygenase (BVMO) dmxR6 then yields monodictylactone in equilibrium with monodictyphenone. In the case of the cryptosporioptides biosynthesis, monodictylactone is reduced at C-12 to an alcohol (by the short chain dehydrogenases dmxR12 or dmxR8) and hydroxylated at C-5 by dmxR9, yielding the electron-rich aromatic which could eliminate H(2)O to form the ortho-quinonemethide, followed by tautomerisation to paraquinone and complete the formal reduction to produce the 10-methylgroup. Conjugate addition of C-4a-OH to the resulting paraquinone by the monooxygenase dmxR10 then gives cyclohexadienone, which is then reduced at C-5 by the short chain dehydrogenase dmxR3 to give the dihydroxanthone. The 6,7-epoxide in the cryptosporioptides could be introduced by the cytochrome P450 monooxygenase dmxL3. The highly reducing PKS dmxL2 manufactures butyrate, which is further carboxylated by dmxL1 to form ethylmalonate. It is not yet clear whether the carboxylation occurs while the butyrate is attached to the ACP of dmxL2, but this unusual fungal metabolite could then be esterified to O-5 by the O-acetyltransferase dmxR13. Finally, dimerization performed by dmxR5 gives the observed dimers cryptosporioptides A, B and C as the final products of the pathway. The chain is Short chain dehydrogenase/reductase dmxR18 from Cryptosporiopsis sp. (strain 8999).